The chain runs to 611 residues: MQQDQRKKSSTEADFFTEYGDASRYKIQEVIGKGSYGVVCSAIDVHTGEKVAIKKIHDIFEHISDAARILREIKLLRLLRHPDIVEIKHIMLPPSRRDFKDIYVVFELMESDLHQVIKANDDLTKEHYQFFLYQLLRALKYIHTANVYHRDLKPKNILANSNCKLKICDFGLARVAFNDTPTTIFWTDYVATRWYRAPELCGSFFSKYTPAIDIWSIGCIFAEVLTGKPLFPGKNVVHQLDLMTDLLGTPSMDTISRVRNDKARRYLSSMRKKEPILFSQKFPSADPLALDLLQKLLAFDPKDRPTAEEALAHPYFKGLAKVEREPSCQPITKMEFEFERRRVTKEDIRELIFREILEYHPQLLKDYINGTERTTFLYPSAVDQFRKQFAHLEENGGNGPVIPMDRKHTSLPRSTIVHSTPIPAKEQPRIGPSRDKPSDEPYSNPREFDRFSGNAPRTSQAPQRVPTARPGRVVGPVLPYENGATKDSYDARRLAMNSGYPPQQQIPQAYGYYQIPGKSACSELSQAERYTLHQQAYTCANSATVTDVALDMRAPPFHLSGGPKSDSSERLAAETNLYTRSLNGLAATAAGVAASAHRKVGVVPYGMSRMY.

The 292-residue stretch at 25-316 folds into the Protein kinase domain; sequence YKIQEVIGKG…AEEALAHPYF (292 aa). Residues 31-39 and lysine 54 contribute to the ATP site; that span reads IGKGSYGVV. Aspartate 151 acts as the Proton acceptor in catalysis. Phosphothreonine is present on threonine 187. A TXY motif is present at residues 187 to 189; that stretch reads TDY. Tyrosine 189 carries the phosphotyrosine modification. Residues 394–481 form a disordered region; that stretch reads ENGGNGPVIP…RVVGPVLPYE (88 aa). A compositionally biased stretch (basic and acidic residues) spans 426–439; the sequence is EQPRIGPSRDKPSD.

Belongs to the protein kinase superfamily. CMGC Ser/Thr protein kinase family. MAP kinase subfamily. In terms of processing, dually phosphorylated on Thr-187 and Tyr-189, which activates the enzyme.

It catalyses the reaction L-seryl-[protein] + ATP = O-phospho-L-seryl-[protein] + ADP + H(+). The enzyme catalyses L-threonyl-[protein] + ATP = O-phospho-L-threonyl-[protein] + ADP + H(+). With respect to regulation, activated by threonine and tyrosine phosphorylation. The protein is Mitogen-activated protein kinase 10 (MPK10) of Oryza sativa subsp. japonica (Rice).